The primary structure comprises 166 residues: MFPMVTEFMNYGQQTVRAARYIGQGFMITLSHANRLPVTIQYPYEKLITSERFRGRIHFEFDKCIACEVCVRVCPIDLPVVDWKLETDIRKKRLLNYSIDFGICIFCGNCVEYCPTNCLSMTEEYELSTYDRHELNYNQIALGRLPMSIIDDYTIRTILNLPEIKN.

4Fe-4S ferredoxin-type domains are found at residues Gly-55 to Lys-84 and Leu-95 to Glu-124. Positions 64, 67, 70, 74, 104, 107, 110, and 114 each coordinate [4Fe-4S] cluster.

Belongs to the complex I 23 kDa subunit family. As to quaternary structure, NDH is composed of at least 16 different subunits, 5 of which are encoded in the nucleus. [4Fe-4S] cluster serves as cofactor.

The protein localises to the plastid. The protein resides in the chloroplast thylakoid membrane. It catalyses the reaction a plastoquinone + NADH + (n+1) H(+)(in) = a plastoquinol + NAD(+) + n H(+)(out). The enzyme catalyses a plastoquinone + NADPH + (n+1) H(+)(in) = a plastoquinol + NADP(+) + n H(+)(out). Its function is as follows. NDH shuttles electrons from NAD(P)H:plastoquinone, via FMN and iron-sulfur (Fe-S) centers, to quinones in the photosynthetic chain and possibly in a chloroplast respiratory chain. The immediate electron acceptor for the enzyme in this species is believed to be plastoquinone. Couples the redox reaction to proton translocation, and thus conserves the redox energy in a proton gradient. In Lasianthaea macrocephala (Lipochaeta macrocephala), this protein is NAD(P)H-quinone oxidoreductase subunit I, chloroplastic.